The primary structure comprises 342 residues: HTH-type transcriptional regulator GbpR (342 aa).

The HTH lysR-type domain occupies 16-73 (LKLRHLQLFVALDEHRNLHRAAASLTMSQPAASKLLGDLEESLGVTLFERHGRGVEPN). A DNA-binding region (H-T-H motif) is located at residues 33 to 52 (LHRAAASLTMSQPAASKLLG).

It belongs to the LysR transcriptional regulatory family.

Functionally, does not seem to be required for sbpA expression. The protein is HTH-type transcriptional regulator GbpR (gbpR) of Azospirillum brasilense.